A 377-amino-acid chain; its full sequence is Mitogen-activated protein kinase pmk-1 (377 aa).

One can recognise a Protein kinase domain in the interval 35–319 (YINLTPIGTG…AKEAMEHEYL (285 aa)). ATP is bound by residues 41–49 (IGTGAYGTV) and Lys-64. Catalysis depends on Asp-179, which acts as the Proton acceptor. At Thr-191 the chain carries Phosphothreonine. A TXY motif is present at residues 191–193 (TGY). Tyr-193 is modified (phosphotyrosine).

The protein belongs to the protein kinase superfamily. CMGC Ser/Thr protein kinase family. MAP kinase subfamily. In terms of assembly, interacts with transcription factor atf-7; perhaps in a manner dependent on dual specificity protein kinase sek-1. It depends on Mg(2+) as a cofactor. Mn(2+) serves as cofactor. Post-translationally, dually phosphorylated on Thr-191 and Tyr-193, probably by sek-1, which activates the enzyme. Increased phosphorylation in response to the heavy metal arsenite. Increased phosphorylation in response to intestinal colonization by probiotic Lactobacillus fermentum strain JDFM216. As to expression, expressed in intestinal cells.

Its subcellular location is the nucleus. The catalysed reaction is L-seryl-[protein] + ATP = O-phospho-L-seryl-[protein] + ADP + H(+). It catalyses the reaction L-threonyl-[protein] + ATP = O-phospho-L-threonyl-[protein] + ADP + H(+). Its activity is regulated as follows. Activated by phosphorylation on threonine and tyrosine. Inhibited by pyridinyl-imidazole related compounds. In terms of biological role, serine/threonine kinase which responds to activation by environmental stress and pro-inflammatory cytokines by phosphorylating downstream targets. As part of a MAP kinase signaling pathway, plays a role in modulation of lifespan and immunity. Phosphorylates skn-1 which probably regulates skn-1 nuclear translocation in response to oxidative stress. Probably by activating skn-1, involved in the up-regulation of gcs-1 and glutathione-S-transferase gst-4 expression upon bacteria infection. Up-regulates expression of gcs-1 in intestinal cells upon arsenite treatment. Functions downstream of the MAPKK sek-1 and the MAPKKK nsy-1 as the MAP kinase which regulates pathogen resistance and responses to oxidative stress. Required for expression of antimicrobial peptide nlp-29 in response to fungal infection or physical injury. Involved in resistance to the nematotoxic C.cinerea galectin (Cgl2). May play a redundant role with other MAP kinases in susceptibility to anoxia, downstream of tir-1/nsy-1. Phosphorylates transcription factor rnt-1 during oxidative stress which results in rnt-1 stabilization in the intestine. Phosphorylates transcription factor atf-7 during pathogen infection resulting in modulation of target genes. Probably downstream of nsy-1 and sek-1, involved in germline apoptosis induced by heavy metals, such as Cu(2+). Regulates the basal expression of immune effector genes including irg-4, irg-5, mul-1 and drd-50. The polypeptide is Mitogen-activated protein kinase pmk-1 (Caenorhabditis elegans).